The primary structure comprises 72 residues: NAD(P)H-quinone oxidoreductase subunit O (72 aa).

Belongs to the complex I NdhO subunit family. NDH-1 can be composed of about 15 different subunits; different subcomplexes with different compositions have been identified which probably have different functions.

It localises to the cellular thylakoid membrane. The enzyme catalyses a plastoquinone + NADH + (n+1) H(+)(in) = a plastoquinol + NAD(+) + n H(+)(out). It catalyses the reaction a plastoquinone + NADPH + (n+1) H(+)(in) = a plastoquinol + NADP(+) + n H(+)(out). Functionally, NDH-1 shuttles electrons from an unknown electron donor, via FMN and iron-sulfur (Fe-S) centers, to quinones in the respiratory and/or the photosynthetic chain. The immediate electron acceptor for the enzyme in this species is believed to be plastoquinone. Couples the redox reaction to proton translocation, and thus conserves the redox energy in a proton gradient. Cyanobacterial NDH-1 also plays a role in inorganic carbon-concentration. This Gloeothece citriformis (strain PCC 7424) (Cyanothece sp. (strain PCC 7424)) protein is NAD(P)H-quinone oxidoreductase subunit O.